The following is a 182-amino-acid chain: MPLLNTVTTPYAEAFLQVAESRNEVDEVVTQAKSILELWNSCPEFSDAMSSPVLEVNQKKAALEKLFSSQVTPSFLNLLKLLADRQRIGLLNSVLERLLEIYREQRNIALATITSASALNEDQQSELLKKVQSIAGTDNLEIDLKVDSELLGGFVVNVGSKVIDASIAGQVRRLGLALAKVS.

Belongs to the ATPase delta chain family. F-type ATPases have 2 components, F(1) - the catalytic core - and F(0) - the membrane proton channel. F(1) has five subunits: alpha(3), beta(3), gamma(1), delta(1), epsilon(1). CF(0) has four main subunits: a(1), b(1), b'(1) and c(10-14). The alpha and beta chains form an alternating ring which encloses part of the gamma chain. F(1) is attached to F(0) by a central stalk formed by the gamma and epsilon chains, while a peripheral stalk is formed by the delta, b and b' chains.

The protein localises to the cellular thylakoid membrane. F(1)F(0) ATP synthase produces ATP from ADP in the presence of a proton or sodium gradient. F-type ATPases consist of two structural domains, F(1) containing the extramembraneous catalytic core and F(0) containing the membrane proton channel, linked together by a central stalk and a peripheral stalk. During catalysis, ATP synthesis in the catalytic domain of F(1) is coupled via a rotary mechanism of the central stalk subunits to proton translocation. Functionally, this protein is part of the stalk that links CF(0) to CF(1). It either transmits conformational changes from CF(0) to CF(1) or is implicated in proton conduction. In Prochlorococcus marinus (strain NATL2A), this protein is ATP synthase subunit delta.